The primary structure comprises 273 residues: Nitrogenase iron protein 5 (273 aa).

G8–S15 is an ATP binding site. [4Fe-4S] cluster is bound at residue C94. Position 97 is an ADP-ribosylarginine; by dinitrogenase reductase ADP-ribosyltransferase (R97). Residue C129 coordinates [4Fe-4S] cluster.

It belongs to the NifH/BchL/ChlL family. As to quaternary structure, homodimer. [4Fe-4S] cluster is required as a cofactor. The reversible ADP-ribosylation of Arg-97 inactivates the nitrogenase reductase and regulates nitrogenase activity.

It carries out the reaction N2 + 8 reduced [2Fe-2S]-[ferredoxin] + 16 ATP + 16 H2O = H2 + 8 oxidized [2Fe-2S]-[ferredoxin] + 2 NH4(+) + 16 ADP + 16 phosphate + 6 H(+). Its function is as follows. The key enzymatic reactions in nitrogen fixation are catalyzed by the nitrogenase complex, which has 2 components: the iron protein and the molybdenum-iron protein. This Clostridium pasteurianum protein is Nitrogenase iron protein 5 (nifH5).